The sequence spans 714 residues: Phosphate acetyltransferase (714 aa).

Positions 390 to 714 are phosphate acetyltransferase; it reads AFRYQLTELA…TAIQASQQQQ (325 aa).

This sequence in the N-terminal section; belongs to the CobB/CobQ family. In the C-terminal section; belongs to the phosphate acetyltransferase and butyryltransferase family. Homohexamer.

It localises to the cytoplasm. The catalysed reaction is acetyl-CoA + phosphate = acetyl phosphate + CoA. It catalyses the reaction propanoyl-CoA + phosphate = propanoyl phosphate + CoA. It participates in metabolic intermediate biosynthesis; acetyl-CoA biosynthesis; acetyl-CoA from acetate: step 2/2. With respect to regulation, allosterically inhibited by NADH. Functionally, involved in acetate metabolism. Catalyzes the reversible interconversion of acetyl-CoA and acetyl phosphate. The direction of the overall reaction changes depending on growth conditions. Required for acetate recapture but not for acetate excretion when this organism is grown on ethanolamine (EA); is unable to complement an eutD deletion during growth on EA. Works with proprionate kinase PduW to capture exogenous propionate and regenerate propionyl-CoA during degradation of propionate and 1,2-propanediol (1,2-PD). This chain is Phosphate acetyltransferase (pta), found in Salmonella typhimurium (strain LT2 / SGSC1412 / ATCC 700720).